The sequence spans 489 residues: Acetyl-coenzyme A carboxylase carboxyl transferase subunit beta, chloroplastic (489 aa).

Residues 225-489 (LWIQCDNCYG…FFPLNKTEIK (265 aa)) form the CoA carboxyltransferase N-terminal domain. Zn(2+) is bound by residues C229, C232, C245, and C248. The C4-type zinc-finger motif lies at 229–248 (CDNCYGLMYKKVEMNVCEEC).

This sequence belongs to the AccD/PCCB family. Acetyl-CoA carboxylase is a heterohexamer composed of biotin carboxyl carrier protein, biotin carboxylase and 2 subunits each of ACCase subunit alpha and ACCase plastid-coded subunit beta (accD). Requires Zn(2+) as cofactor.

It localises to the plastid. The protein localises to the chloroplast stroma. It carries out the reaction N(6)-carboxybiotinyl-L-lysyl-[protein] + acetyl-CoA = N(6)-biotinyl-L-lysyl-[protein] + malonyl-CoA. It functions in the pathway lipid metabolism; malonyl-CoA biosynthesis; malonyl-CoA from acetyl-CoA: step 1/1. Its function is as follows. Component of the acetyl coenzyme A carboxylase (ACC) complex. Biotin carboxylase (BC) catalyzes the carboxylation of biotin on its carrier protein (BCCP) and then the CO(2) group is transferred by the transcarboxylase to acetyl-CoA to form malonyl-CoA. The polypeptide is Acetyl-coenzyme A carboxylase carboxyl transferase subunit beta, chloroplastic (Draba nemorosa (Woodland whitlowgrass)).